Here is a 229-residue protein sequence, read N- to C-terminus: Prolactin (229 aa).

The signal sequence occupies residues 1 to 30 (MDSKGSAQKGSRLLLLLVVSNLLLCQGVVS). Cysteines 34 and 41 form a disulfide. Residues S56, S64, and S120 each carry the phosphoserine modification. Cystine bridges form between C88–C204 and C221–C229.

This sequence belongs to the somatotropin/prolactin family. Interacts with PRLR.

The protein localises to the secreted. Its function is as follows. Prolactin acts primarily on the mammary gland by promoting lactation. This is Prolactin (PRL) from Capra hircus (Goat).